A 129-amino-acid polypeptide reads, in one-letter code: L-ectoine synthase (129 aa).

The protein belongs to the ectoine synthase family.

It carries out the reaction (2S)-4-acetamido-2-aminobutanoate = L-ectoine + H2O. It functions in the pathway amine and polyamine biosynthesis; ectoine biosynthesis; L-ectoine from L-aspartate 4-semialdehyde: step 3/3. In terms of biological role, catalyzes the circularization of gamma-N-acetyl-alpha,gamma-diaminobutyric acid (ADABA) to ectoine (1,4,5,6-tetrahydro-2-methyl-4-pyrimidine carboxylic acid), which is an excellent osmoprotectant. The sequence is that of L-ectoine synthase from Halalkalibacterium halodurans (strain ATCC BAA-125 / DSM 18197 / FERM 7344 / JCM 9153 / C-125) (Bacillus halodurans).